The following is a 222-amino-acid chain: Phosphoenolpyruvate guanylyltransferase (222 aa).

Positions 134, 150, and 153 each coordinate phosphoenolpyruvate.

The protein belongs to the CofC family.

The catalysed reaction is phosphoenolpyruvate + GTP + H(+) = enolpyruvoyl-2-diphospho-5'-guanosine + diphosphate. It functions in the pathway cofactor biosynthesis; coenzyme F420 biosynthesis. In terms of biological role, guanylyltransferase that catalyzes the activation of phosphoenolpyruvate (PEP) as enolpyruvoyl-2-diphospho-5'-guanosine, via the condensation of PEP with GTP. It is involved in the biosynthesis of coenzyme F420, a hydride carrier cofactor. The sequence is that of Phosphoenolpyruvate guanylyltransferase from Roseiflexus sp. (strain RS-1).